A 348-amino-acid chain; its full sequence is Phosphate acyltransferase (348 aa).

Belongs to the PlsX family. In terms of assembly, homodimer. Probably interacts with PlsY.

It is found in the cytoplasm. The catalysed reaction is a fatty acyl-[ACP] + phosphate = an acyl phosphate + holo-[ACP]. Its pathway is lipid metabolism; phospholipid metabolism. Its function is as follows. Catalyzes the reversible formation of acyl-phosphate (acyl-PO(4)) from acyl-[acyl-carrier-protein] (acyl-ACP). This enzyme utilizes acyl-ACP as fatty acyl donor, but not acyl-CoA. The polypeptide is Phosphate acyltransferase (Rhizobium rhizogenes (strain K84 / ATCC BAA-868) (Agrobacterium radiobacter)).